Consider the following 237-residue polypeptide: Ribonuclease 3 (237 aa).

In terms of domain architecture, RNase III spans 5-136 (VDELSARLGV…VIAALFLDQG (132 aa)). Glu49 provides a ligand contact to Mg(2+). Asp53 is a catalytic residue. Mg(2+) contacts are provided by Asp122 and Glu125. Residue Glu125 is part of the active site. Positions 163–232 (DYKSRLQARI…ARAALDALEG (70 aa)) constitute a DRBM domain. A compositionally biased stretch (basic and acidic residues) spans 185–208 (IDRSGPEHRPEFTVEVRAGEERLG). The interval 185-237 (IDRSGPEHRPEFTVEVRAGEERLGTGKGPSKQAAEQAAARAALDALEGGTDGR) is disordered. Over residues 216–231 (QAAEQAAARAALDALE) the composition is skewed to low complexity.

Belongs to the ribonuclease III family. In terms of assembly, homodimer. The cofactor is Mg(2+).

The protein resides in the cytoplasm. It carries out the reaction Endonucleolytic cleavage to 5'-phosphomonoester.. Functionally, digests double-stranded RNA. Involved in the processing of primary rRNA transcript to yield the immediate precursors to the large and small rRNAs (23S and 16S). Processes some mRNAs, and tRNAs when they are encoded in the rRNA operon. Processes pre-crRNA and tracrRNA of type II CRISPR loci if present in the organism. This chain is Ribonuclease 3, found in Roseiflexus sp. (strain RS-1).